Here is a 156-residue protein sequence, read N- to C-terminus: Small ribosomal subunit protein uS7 (156 aa).

This sequence belongs to the universal ribosomal protein uS7 family. Part of the 30S ribosomal subunit. Contacts proteins S9 and S11.

In terms of biological role, one of the primary rRNA binding proteins, it binds directly to 16S rRNA where it nucleates assembly of the head domain of the 30S subunit. Is located at the subunit interface close to the decoding center, probably blocks exit of the E-site tRNA. The polypeptide is Small ribosomal subunit protein uS7 (Aeromonas salmonicida (strain A449)).